The chain runs to 325 residues: Acetyl-coenzyme A carboxylase carboxyl transferase subunit alpha (325 aa).

Residues 35-292 (EIEKLEARLA…DKVLKRSLKQ (258 aa)) enclose the CoA carboxyltransferase C-terminal domain.

It belongs to the AccA family. As to quaternary structure, acetyl-CoA carboxylase is a heterohexamer composed of biotin carboxyl carrier protein (AccB), biotin carboxylase (AccC) and two subunits each of ACCase subunit alpha (AccA) and ACCase subunit beta (AccD).

Its subcellular location is the cytoplasm. The enzyme catalyses N(6)-carboxybiotinyl-L-lysyl-[protein] + acetyl-CoA = N(6)-biotinyl-L-lysyl-[protein] + malonyl-CoA. The protein operates within lipid metabolism; malonyl-CoA biosynthesis; malonyl-CoA from acetyl-CoA: step 1/1. In terms of biological role, component of the acetyl coenzyme A carboxylase (ACC) complex. First, biotin carboxylase catalyzes the carboxylation of biotin on its carrier protein (BCCP) and then the CO(2) group is transferred by the carboxyltransferase to acetyl-CoA to form malonyl-CoA. The protein is Acetyl-coenzyme A carboxylase carboxyl transferase subunit alpha of Geobacillus sp. (strain WCH70).